Consider the following 201-residue polypeptide: Ras-related protein Rab-9A (201 aa).

N-acetylalanine is present on alanine 2. GTP-binding residues include glycine 17, valine 18, glycine 19, lysine 20, serine 21, serine 22, aspartate 33, serine 34, histidine 38, and threonine 39. A Mg(2+)-binding site is contributed by serine 21. Positions 31–42 match the Switch 1 motif; the sequence is KFDSQLFHTIGV. Residue serine 34 is modified to Phosphoserine. Threonine 39 and aspartate 62 together coordinate Mg(2+). The Switch 2 motif lies at 64–78; sequence AGQERFRSLRTPFYR. Glycine 65, asparagine 124, lysine 125, aspartate 127, alanine 155, and lysine 156 together coordinate GTP. Serine 179 is subject to Phosphoserine. Position 187 is a phosphothreonine (threonine 187). Residues cysteine 200 and cysteine 201 are each lipidated (S-geranylgeranyl cysteine).

The protein belongs to the small GTPase superfamily. Rab family. Interacts (preferentially in its GTP-bound form) with GCC2 (via its GRIP domain). Interacts (GTP-bound form) with SGSM1; the GDP-bound form has much lower affinity for SGSM1. Interacts with SGSM2. The GTP-bound form but not the GDP-bound form interacts with HPS4. The GTP-bound form but not the GDP-bound form interacts with BLOC-3 complex (heterodimer of HPS1 and HPS4) but does not interact with HPS1 alone. Interacts (GTP-bound form) with NDE1; two RAB9A-GTP molecules lie on the opposite sides of the NDE1 homodimer; the interaction leads to RAB9A-dynein motor tethering. Interacts (GTP-bound form) with NDEL1. Requires Mg(2+) as cofactor.

The protein resides in the cell membrane. Its subcellular location is the endoplasmic reticulum membrane. The protein localises to the golgi apparatus membrane. It localises to the late endosome. It is found in the cytoplasmic vesicle. The protein resides in the phagosome membrane. Its subcellular location is the phagosome. The protein localises to the cytoplasmic vesicle membrane. It localises to the melanosome. It catalyses the reaction GTP + H2O = GDP + phosphate + H(+). Its activity is regulated as follows. Regulated by guanine nucleotide exchange factors (GEFs) which promote the exchange of bound GDP for free GTP. Regulated by GTPase activating proteins (GAPs) which increase the GTP hydrolysis activity. Inhibited by GDP dissociation inhibitors (GDIs). Functionally, the small GTPases Rab are key regulators of intracellular membrane trafficking, from the formation of transport vesicles to their fusion with membranes. Rabs cycle between an inactive GDP-bound form and an active GTP-bound form that is able to recruit to membranes different sets of downstream effectors directly responsible for vesicle formation, movement, tethering and fusion. RAB9A is involved in the transport of proteins between the endosomes and the trans-Golgi network (TGN). Specifically uses NDE1/NDEL1 as an effector to interact with the dynein motor complex in order to control retrograde trafficking of RAB9-associated late endosomes to the TGN. Involved in the recruitment of SGSM2 to melanosomes and is required for the proper trafficking of melanogenic enzymes TYR, TYRP1 and DCT/TYRP2 to melanosomes in melanocytes. The protein is Ras-related protein Rab-9A of Mus musculus (Mouse).